The following is a 519-amino-acid chain: Ribonuclease Y (519 aa).

Residues 3-23 (PLAILISILLSLFCLVVGYYV) form a helical membrane-spanning segment. The KH domain occupies 209–272 (TVSVVNLPND…ETARIALDKL (64 aa)). The region spanning 335–428 (VLKHSMEVAF…VAAADALSAA (94 aa)) is the HD domain.

The protein belongs to the RNase Y family.

It localises to the cell membrane. Its function is as follows. Endoribonuclease that initiates mRNA decay. This is Ribonuclease Y from Bacillus licheniformis (strain ATCC 14580 / DSM 13 / JCM 2505 / CCUG 7422 / NBRC 12200 / NCIMB 9375 / NCTC 10341 / NRRL NRS-1264 / Gibson 46).